The following is a 465-amino-acid chain: Ribulose bisphosphate carboxylase large chain (465 aa).

Position 4 is an N6,N6,N6-trimethyllysine (Lys4). 2 residues coordinate substrate: Asn113 and Thr163. Lys165 (proton acceptor) is an active-site residue. Lys167 contacts substrate. Lys191, Asp193, and Glu194 together coordinate Mg(2+). At Lys191 the chain carries N6-carboxylysine. His284 serves as the catalytic Proton acceptor. 3 residues coordinate substrate: Arg285, His317, and Ser369.

Belongs to the RuBisCO large chain family. Type I subfamily. In terms of assembly, heterohexadecamer of 8 large chains and 8 small chains; disulfide-linked. The disulfide link is formed within the large subunit homodimers. Mg(2+) is required as a cofactor. Post-translationally, the disulfide bond which can form in the large chain dimeric partners within the hexadecamer appears to be associated with oxidative stress and protein turnover.

Its subcellular location is the plastid. The protein localises to the chloroplast. The enzyme catalyses 2 (2R)-3-phosphoglycerate + 2 H(+) = D-ribulose 1,5-bisphosphate + CO2 + H2O. It catalyses the reaction D-ribulose 1,5-bisphosphate + O2 = 2-phosphoglycolate + (2R)-3-phosphoglycerate + 2 H(+). Functionally, ruBisCO catalyzes two reactions: the carboxylation of D-ribulose 1,5-bisphosphate, the primary event in carbon dioxide fixation, as well as the oxidative fragmentation of the pentose substrate in the photorespiration process. Both reactions occur simultaneously and in competition at the same active site. The polypeptide is Ribulose bisphosphate carboxylase large chain (Cornus florida (Flowering dogwood)).